The primary structure comprises 471 residues: uncharacterized protein (471 aa).

Residues 13–57 (KGGATIGATPMESDSSVSALSGSSASKVSRRGRRRSHLASKSSAP) form a disordered region. Residues 27–39 (SSVSALSGSSASK) show a composition bias toward low complexity. Residues 40–50 (VSRRGRRRSHL) are compositionally biased toward basic residues. CCHC-type zinc fingers lie at residues 397 to 414 (YACH…ECRQ) and 417 to 434 (SVCR…KCQN). The tract at residues 438-457 (CRNCRHRGQPSGHYMLSNAC) is gag-like cysteine motif.

To corresponding ORF of B.mori (R1BM).

This is an uncharacterized protein from Drosophila melanogaster (Fruit fly).